A 291-amino-acid chain; its full sequence is Protein US2 (291 aa).

Position 2 is an N-acetylglycine; by host (Gly-2). Residues 223 to 281 form a disordered region; that stretch reads NKPRPASSRPHPATHPTQRPCFTCMGRPEIPDEPSWQTGDDDPQNPGPPLAVGDEWPPS.

Belongs to the herpesviridae HHV-1 US2 protein family. In terms of assembly, interacts with host KRT18. Interacts with host MAP3K7; this interaction induces host NF-kappa-B pathway.

Its subcellular location is the virion. It is found in the host cytoplasm. It localises to the host cell surface. The protein resides in the host nucleus. Functionally, plays a role in the activation of the host NF-kappa-B pathway by interacting with and thus activating the component MAP3K7. The sequence is that of Protein US2 from Human herpesvirus 2 (strain HG52) (HHV-2).